The primary structure comprises 226 residues: RNA-binding protein 24 (226 aa).

The region spanning 11-88 (TKIFVGGLPY…RKANVNLAYL (78 aa)) is the RRM domain.

It localises to the nucleus. The protein resides in the cytoplasm. Its function is as follows. Multifunctional RNA-binding protein involved in the regulation of pre-mRNA splicing, mRNA stability and mRNA translation important for cell fate decision and differentiation. Plays a major role in pre-mRNA alternative splicing regulation. Mediates preferentially muscle-specific exon inclusion in numerous mRNAs important for striated cardiac and skeletal muscle cell differentiation. Binds to intronic splicing enhancer (ISE) composed of stretches of GU-rich motifs localized in flanking intron of exon that will be included by alternative splicing. Involved in embryonic stem cell (ESC) transition to cardiac cell differentiation by promoting pre-mRNA alternative splicing events of several pluripotency and/or differentiation genes. Plays a role in the regulation of mRNA stability and mRNA translation to which it is bound. Involved in myogenic differentiation by regulating myog levels. Binds to a huge amount of mRNAs. Required for embryonic heart development, sarcomer and M-band formation in striated muscles. This is RNA-binding protein 24 (rbm24) from Xenopus tropicalis (Western clawed frog).